The chain runs to 92 residues: Phospholemman (92 aa).

A signal peptide spans Met1–Ala20. Residues Glu21–Ser35 lie on the Extracellular side of the membrane. Residues Leu36–Leu56 form a helical membrane-spanning segment. The Cytoplasmic segment spans residues Ser57 to Arg92. Residue Cys60 is the site of S-palmitoyl cysteine attachment. Cys62 carries the post-translational modification S-glutathionyl cysteine; alternate. Cys62 is lipidated: S-palmitoyl cysteine; alternate. A disordered region spans residues Asn65–Arg92. Thr79 carries the post-translational modification Phosphothreonine. Ser82 is subject to Phosphoserine. Phosphoserine; by PKA and PKC is present on Ser83. Basic residues predominate over residues Ser83–Arg92. Phosphoserine; by PKA is present on Ser88. A Phosphothreonine; by PKC modification is found at Thr89.

This sequence belongs to the FXYD family. As to quaternary structure, homotetramer. Monomer. Regulatory subunit of the sodium/potassium-transporting ATPase (NKA) which is composed of a catalytic alpha subunit, an auxiliary non-catalytic beta subunit and an additional regulatory subunit. The monomeric form associates with NKA while the oligomeric form does not. Interacts with the catalytic alpha-1 subunit ATP1A1. Also interacts with the catalytic alpha-2 and alpha-3 subunits ATP1A2 and ATP1A3. Very little interaction with ATP1A1, ATP1A2 or ATP1A3 when phosphorylated at Ser-83. Interacts with the non-catalytic beta-1 subunit ATP1B1. Oxidative stress decreases interaction with ATP1A1 but increases interaction with ATP1B1. Post-translationally, major plasma membrane substrate for cAMP-dependent protein kinase (PKA) and protein kinase C (PKC) in several different tissues. Phosphorylated in response to insulin and adrenergic stimulation. Phosphorylation at Ser-88 stimulates sodium/potassium-transporting ATPase activity while the unphosphorylated form inhibits sodium/potassium-transporting ATPase activity. Phosphorylation increases tetramerization, decreases binding to ATP1A1 and reduces inhibition of ATP1A1 activity. Phosphorylation at Ser-83 leads to greatly reduced interaction with ATP1A1, ATP1A2 and ATP1A3. May be phosphorylated by DMPK. Palmitoylation increases half-life and stability and is enhanced upon phosphorylation at Ser-88 by PKA. Highest expression in skeletal muscle and heart. Moderate levels in brain, placenta, lung, liver, pancreas, uterus, bladder, prostate, small intestine and colon with mucosal lining. Very low levels in kidney, colon and small intestine without mucosa, prostate without endothelial lining, spleen, and testis.

It localises to the cell membrane. The protein resides in the sarcolemma. Its subcellular location is the apical cell membrane. It is found in the membrane. The protein localises to the caveola. It localises to the T-tubule. In terms of biological role, associates with and regulates the activity of the sodium/potassium-transporting ATPase (NKA) which transports Na(+) out of the cell and K(+) into the cell. Inhibits NKA activity in its unphosphorylated state and stimulates activity when phosphorylated. Reduces glutathionylation of the NKA beta-1 subunit ATP1B1, thus reversing glutathionylation-mediated inhibition of ATP1B1. Contributes to female sexual development by maintaining the excitability of neurons which secrete gonadotropin-releasing hormone. This chain is Phospholemman, found in Homo sapiens (Human).